Consider the following 369-residue polypeptide: N-succinylamino acid racemase (369 aa).

Residue Lys163 is the Proton donor of the active site. Residues Asp188, Glu213, and Asp238 each contribute to the Mg(2+) site. Lys262 functions as the Proton acceptor in the catalytic mechanism.

It belongs to the mandelate racemase/muconate lactonizing enzyme family. MenC type 2 subfamily. As to quaternary structure, homooctamer. Tetramer of dimers. The cofactor is a divalent metal cation.

It catalyses the reaction (1R,6R)-6-hydroxy-2-succinyl-cyclohexa-2,4-diene-1-carboxylate = 2-succinylbenzoate + H2O. Acts as a N-succinylamino acid racemase (NSAR) that catalyzes the racemization of N-succinyl-L-phenylglycine. Also converts 2-succinyl-6-hydroxy-2,4-cyclohexadiene-1-carboxylate (SHCHC) to 2-succinylbenzoate (OSB). Catalyzes both N-succinylamino acid racemization and OSB synthesis at equivalent rates. However, NSAR activity is probably the protein's biological function, because menaquinone biosynthesis genes are missing in this species. In Thermus thermophilus (strain ATCC 27634 / DSM 579 / HB8), this protein is N-succinylamino acid racemase.